The sequence spans 104 residues: L-rhamnose mutarotase (104 aa).

Residue Tyr18 coordinates substrate. The active-site Proton donor is the His22. Residues Tyr41 and 76-77 each bind substrate; that span reads WW.

It belongs to the rhamnose mutarotase family. As to quaternary structure, homodimer.

The protein localises to the cytoplasm. It carries out the reaction alpha-L-rhamnose = beta-L-rhamnose. It functions in the pathway carbohydrate metabolism; L-rhamnose metabolism. Functionally, involved in the anomeric conversion of L-rhamnose. The polypeptide is L-rhamnose mutarotase (Bacteroides thetaiotaomicron (strain ATCC 29148 / DSM 2079 / JCM 5827 / CCUG 10774 / NCTC 10582 / VPI-5482 / E50)).